The following is a 703-amino-acid chain: DNA ligase (703 aa).

Residues 44–48, 93–94, and E127 each bind NAD(+); these read DAEYD and SL. The N6-AMP-lysine intermediate role is filled by K129. NAD(+) contacts are provided by R150, E186, K302, and K326. Positions 420, 422, 444, and 450 each coordinate Zn(2+). Positions 625–703 constitute a BRCT domain; the sequence is VADSPVAGKT…EDMWFQRIGA (79 aa).

The protein belongs to the NAD-dependent DNA ligase family. LigA subfamily. The cofactor is Mg(2+). Requires Mn(2+) as cofactor.

It carries out the reaction NAD(+) + (deoxyribonucleotide)n-3'-hydroxyl + 5'-phospho-(deoxyribonucleotide)m = (deoxyribonucleotide)n+m + AMP + beta-nicotinamide D-nucleotide.. Functionally, DNA ligase that catalyzes the formation of phosphodiester linkages between 5'-phosphoryl and 3'-hydroxyl groups in double-stranded DNA using NAD as a coenzyme and as the energy source for the reaction. It is essential for DNA replication and repair of damaged DNA. This is DNA ligase from Chelativorans sp. (strain BNC1).